A 740-amino-acid chain; its full sequence is Ribosomal protein S6 kinase alpha-3 (740 aa).

The segment at 1–26 (MPLAQLADPWQKMAVESPSDSAENGQ) is disordered. Residues 68–327 (FELLKVLGQG…VEEIKRHSFF (260 aa)) form the Protein kinase 1 domain. ATP contacts are provided by residues 74-82 (LGQGSFGKV) and Lys-100. Residue Asp-193 is the Proton acceptor of the active site. Ser-227 carries the post-translational modification Phosphoserine; by PDPK1. The AGC-kinase C-terminal domain maps to 328–397 (STIDWNKLYR…VAITSDDESQ (70 aa)). Position 365 is a phosphothreonine (Thr-365). Ser-369 and Ser-375 each carry phosphoserine. Position 386 is a phosphoserine; by autocatalysis and MAPKAPK2 (Ser-386). Phosphoserine is present on Ser-415. The Protein kinase 2 domain occupies 422–679 (YEVKEDIGVG…AALVLRHPWI (258 aa)). Residues 428-436 (IGVGSYSVC) and Lys-451 each bind ATP. Residue Tyr-529 is modified to Phosphotyrosine; by FGFR3. The active-site Proton acceptor is Asp-539. 2 positions are modified to phosphoserine: Ser-556 and Ser-715.

It belongs to the protein kinase superfamily. AGC Ser/Thr protein kinase family. S6 kinase subfamily. As to quaternary structure, forms a complex with either MAPK1/ERK2 or MAPK3/ERK1 in quiescent cells. Transiently dissociates following mitogenic stimulation. Interacts with NFATC4, ETV1/ER81 and FGFR1. It depends on Mg(2+) as a cofactor. In terms of processing, activated by phosphorylation at Ser-227 by PDPK1. Autophosphorylated on Ser-386, as part of the activation process. May be phosphorylated at Thr-365 and Ser-369 by MAPK1/ERK2 and MAPK3/ERK1. Can also be activated via phosphorylation at Ser-386 by MAPKAPK2. N-terminal myristoylation results in an activated kinase in the absence of added growth factors. As to expression, intestine, thymus, lung, heart and brain.

The protein localises to the nucleus. It is found in the cytoplasm. The enzyme catalyses L-seryl-[protein] + ATP = O-phospho-L-seryl-[protein] + ADP + H(+). It carries out the reaction L-threonyl-[protein] + ATP = O-phospho-L-threonyl-[protein] + ADP + H(+). Its activity is regulated as follows. Upon extracellular signal or mitogen stimulation, phosphorylated at Thr-577 in the C-terminal kinase domain (CTKD) by MAPK1/ERK2 and MAPK3/ERK1. The activated CTKD then autophosphorylates Ser-386, allowing binding of PDPK1, which in turn phosphorylates Ser-227 in the N-terminal kinase domain (NTDK) leading to the full activation of the protein and subsequent phosphorylation of the substrates by the NTKD. Serine/threonine-protein kinase that acts downstream of ERK (MAPK1/ERK2 and MAPK3/ERK1) signaling and mediates mitogenic and stress-induced activation of the transcription factors CREB1, ETV1/ER81 and NR4A1/NUR77, regulates translation through RPS6 and EIF4B phosphorylation, and mediates cellular proliferation, survival, and differentiation by modulating mTOR signaling and repressing pro-apoptotic function of BAD and DAPK1. In fibroblast, is required for EGF-stimulated phosphorylation of CREB1 and histone H3 at 'Ser-10', which results in the subsequent transcriptional activation of several immediate-early genes. In response to mitogenic stimulation (EGF and PMA), phosphorylates and activates NR4A1/NUR77 and ETV1/ER81 transcription factors and the cofactor CREBBP. Upon insulin-derived signal, acts indirectly on the transcription regulation of several genes by phosphorylating GSK3B at 'Ser-9' and inhibiting its activity. Phosphorylates RPS6 in response to serum or EGF via an mTOR-independent mechanism and promotes translation initiation by facilitating assembly of the preinitiation complex. In response to insulin, phosphorylates EIF4B, enhancing EIF4B affinity for the EIF3 complex and stimulating cap-dependent translation. Is involved in the mTOR nutrient-sensing pathway by directly phosphorylating TSC2 at 'Ser-1798', which potently inhibits TSC2 ability to suppress mTOR signaling, and mediates phosphorylation of RPTOR, which regulates mTORC1 activity and may promote rapamycin-sensitive signaling independently of the PI3K/AKT pathway. Mediates cell survival by phosphorylating the pro-apoptotic proteins BAD and DAPK1 and suppressing their pro-apoptotic function. Promotes the survival of hepatic stellate cells by phosphorylating CEBPB in response to the hepatotoxin carbon tetrachloride (CCl4). Is involved in cell cycle regulation by phosphorylating the CDK inhibitor CDKN1B, which promotes CDKN1B association with 14-3-3 proteins and prevents its translocation to the nucleus and inhibition of G1 progression. In LPS-stimulated dendritic cells, is involved in TLR4-induced macropinocytosis, and in myeloma cells, acts as effector of FGFR3-mediated transformation signaling, after direct phosphorylation at Tyr-529 by FGFR3. Negatively regulates EGF-induced MAPK1/3 phosphorylation via phosphorylation of SOS1. Phosphorylates SOS1 at 'Ser-1134' and 'Ser-1161' that create YWHAB and YWHAE binding sites and which contribute to the negative regulation of MAPK1/3 phosphorylation. Phosphorylates EPHA2 at 'Ser-897', the RPS6KA-EPHA2 signaling pathway controls cell migration. Acts as a regulator of osteoblast differentiation by mediating phosphorylation of ATF4, thereby promoting ATF4 transactivation activity. The chain is Ribosomal protein S6 kinase alpha-3 (Rps6ka3) from Mus musculus (Mouse).